A 701-amino-acid polypeptide reads, in one-letter code: Long chain acyl-CoA synthetase 6, peroxisomal (701 aa).

A propeptide spans 1–38 (MDSSSSSSSAAARRRINAIHSHLVTSSRSSPLLRSNPT) (removed in mature form). Positions 15–23 (RINAIHSHL) match the Microbody targeting signal motif. 266 to 277 (ICYTSGTTGTPK) contacts ATP. The segment at 526-550 (DGWLHTGDIGLWLPGGRLKIIDRKK) is fatty acid-binding.

The protein belongs to the ATP-dependent AMP-binding enzyme family. Mg(2+) serves as cofactor. As to expression, expressed in roots, stems, leaves flowers and germinating seedling. Preferentially expressed in seeds and senescent leaves.

The protein localises to the peroxisome. It is found in the glyoxysome membrane. It carries out the reaction a long-chain fatty acid + ATP + CoA = a long-chain fatty acyl-CoA + AMP + diphosphate. The enzyme catalyses tetradecanoate + ATP + CoA = tetradecanoyl-CoA + AMP + diphosphate. The catalysed reaction is hexadecanoate + ATP + CoA = hexadecanoyl-CoA + AMP + diphosphate. It catalyses the reaction (9Z)-octadecenoate + ATP + CoA = (9Z)-octadecenoyl-CoA + AMP + diphosphate. It carries out the reaction (9Z,12Z)-octadecadienoate + ATP + CoA = (9Z,12Z)-octadecadienoyl-CoA + AMP + diphosphate. The enzyme catalyses (9Z,12Z,15Z)-octadecatrienoate + ATP + CoA = (9Z,12Z,15Z)-octadecatrienoyl-CoA + AMP + diphosphate. Its pathway is lipid metabolism; fatty acid metabolism. In terms of biological role, activation of long-chain fatty acids for both synthesis of cellular lipids, and degradation via beta-oxidation. Preferentially uses palmitate, palmitoleate, oleate, linoleate and eicosenoate as substrates. Can use myristate and linolenate as substrates. May play a regulatory role both in fatty acid import into glyoxysomes and in fatty acid beta-oxidation. Functions redundantly with LACS7 in lipid mobilization for beta-oxidation during seed germination, which is essential for postgerminative growth and seedling establishment. This Arabidopsis thaliana (Mouse-ear cress) protein is Long chain acyl-CoA synthetase 6, peroxisomal.